We begin with the raw amino-acid sequence, 388 residues long: Transposase for insertion sequence element IS406 (388 aa).

Belongs to the transposase mutator family.

Functionally, required for the transposition of the insertion element. The sequence is that of Transposase for insertion sequence element IS406 from Burkholderia multivorans (strain ATCC 17616 / 249).